The primary structure comprises 425 residues: Histidine--tRNA ligase (425 aa).

Belongs to the class-II aminoacyl-tRNA synthetase family. As to quaternary structure, homodimer.

The protein localises to the cytoplasm. It carries out the reaction tRNA(His) + L-histidine + ATP = L-histidyl-tRNA(His) + AMP + diphosphate + H(+). The chain is Histidine--tRNA ligase from Shewanella sp. (strain ANA-3).